The following is a 275-amino-acid chain: MALSLLSVFIFFHVFTNVVFAASNEESNALVSLPTPTLPSPSPATKPPSPALKPPTPSYKPPTLPTTPIKPPTTKPPVKPPTIPVTPVKPPVSTPPIKLPPVQPPTYKPPTPTVKPPSVQPPTYKPPTPTVKPPTTSPVKPPTTPPVQSPPVQPPTYKPPTSPVKPPTTTPPVKPPTTTPPVQPPTYNPPTTPVKPPTAPPVKPPTPPPVRTRIDCVPLCGTRCGQHSRKNVCMRACVTCCYRCKCVPPGTYGNKEKCGSCYANMKTRGGKSKCP.

An N-terminal signal peptide occupies residues 1 to 21; the sequence is MALSLLSVFIFFHVFTNVVFA. The interval 34–207 is disordered; sequence PTPTLPSPSP…TAPPVKPPTP (174 aa). The segment covering 36–207 has biased composition (pro residues); the sequence is PTLPSPSPAT…TAPPVKPPTP (172 aa).

The protein belongs to the GASA family. In terms of processing, six disulfide bonds may be present. Expressed in flower abscission zone, style, stamen filaments and lateral roots.

It localises to the secreted. Its function is as follows. Gibberellin-regulated protein that may function in hormonal controlled steps of development such as seed germination, flowering and seed maturation. The chain is Gibberellin-regulated protein 14 (GASA14) from Arabidopsis thaliana (Mouse-ear cress).